The following is a 2476-amino-acid chain: MASSSSSTQAENLILIFGPQDPNLNDAYLQSLRTNLLDSPFLQWIVHTLIQLPQEWQRIAPTHTELGSFQGQKYLQLLSEWMRKGTLPGNIFPLPNILVTPLVVTTHLAQYTKLLEQLNPAIATNDMLSGIVKHDIQTVGLCTGLLSSAAVASSATLAELEKHGAAAIRMAMAIGALVDAGDTEVEDGDKWQSLAVGWTTQNGDAELEGISKQFSHAYVSVISEARLATLTMLKNDANAIQRELTNAGFIYTKTALRGPFHCGSREDQAVSLMRLFDSDPSFQFPGASTLVFRTRAPDGEEFPLDRSLHGAAARAMLTDQADWHKLYTKLHESTNSHPGIVITFGSQRFIPQWFLRKLGPRLAHVLDLDVGSGHWPAPLYTLQDSGQDESIAVVGMACNFPGGSDLDEFWDTVCAAKSQCTEVPPERVDFDYEAWRENDTQRKWFGNFIREYDTFDHKFFQKSPREMISTDPQHRIMLQVAYQAVQQSGYFNRPGRSKHVGCYVGIGVTDYENNVACHPPTAYTATGNLKSFAAGKISHFFGWSGPGVTVDTACSSSALAIHLACKAILSGECDASLAGGVNVITSPEWYQNLDGASFLSPTGQCKPFDAAADGYCRGEGAGAVFLKRLSSAVEDGDQIVGVIRATSVNQNENCSAITAPSVRSLANVFNGVIRKARVDPKQISVVEAHGTGTQVGDRAEYDSIRTVLGGPGRAYPLSLGSVKGLIGHLECASGIAALIKVLLMVQNGIIPPQPGFSKINPKLEALPSDNIEIPTSLRPWNPGFRAALLNNYGASGSNASLVVTQAGVPHLNQSAIPKGASAGRRPFWLSGTDVQSLRSYAAKLVQMLRSRKADDPRFTVANLSFQLARQSNRNLGQALIFSCASVDELEAKLADFASGGNTLTSVPRPDSSRPVILCFGGQRSSFVGLDREAFDSFKLLKSHLTHCHETSLALGLGGILPAIFDRTPRSSIVELQLMQFALQYSCAKTWIDSGIHVAALVGHSFGELTAMCVSGTLSLQDTLRMIAGRARIIEEKWGPDRGSMMAVDGELELVQRLLHNAHEASPNEPAVNIACFNGPRLFTLAGTTKAMRVVREVLSKDNRLSSIKVKSLETSHAFHSTLVEPLIPDLEELGEESIFRKPVVVHERATQNSVAGPPPFSIFASHMRDPVYFDRAVQRLANRYPSSIWLEAGSGSGVTNLASRAAGSRAMAFQSINITSSSAVQNVADATLNLWKEGLQVMFWEHVRPSPKFPLLLLPPYQFAKSRHWLERRKLKTKVFVPASPVQEAQKGLWTFVGYQDSDRCQARFQIHITSDEFQNYVSAHVIAQTAPICPSMFQQVIARDALATLVDGDMIPELEGMENDTPLCLDGSKSVWLVAERPSDRSSAWDFRITSSDSGNTTQHVSGRITFQTPKQSMQAFAAYERLVDHRRALALLNGQEAEQTIQGSRNIYKLFSNVVNYKEDGYRGLQKLAATSNESAGRIIKQDSSKSILGVGLGDTFCQVAGIFLNCMTDCDEGKMYLSNRVERWIRSPTVPLDLRPEQWEVYARHHQPSPKEYVSDIFVFDATNGKLVWVILGLHFVEVSIAGMSRFLTRLSGGQLEPQEKCLATVEFKEVPEPVFTKDVSKNEKDAKAPSKKKESTSKSPGHDILARVRTLFCNLLGLEPVEIQPGADLVELGIDSLLAMEVAREVEKEFSIKFELDELMDMTDVHSLVKCIGANMMASDTSRTGDDSSDDLETASAESETSSGINNEDSHNIDRQQIPASSIVDSFTETKLLTDRFIEANKLSGYSNNVQPRLTELVIVHTLDAFDQMGCSIRAAQPGQTVRRISHLPKHNQVVAVLYGLLEKASLVDVDGPRMTRTAVPVPSKSAEQILQELLRQYPEHAYDHKLTSLTGCKLADCLTGKTEAIQLLFGTPEGRDLAAGMYGKSPINVAWLRQLQHFWEHFLAQLPQHRTEPINILEMGAGTGGTTAALVPLLSRSRIPVRYTATDISPSLVAGLRKRFKDHTWMRFEVVDCEKTPSSHLFESQHVVLAVAIIPPAPSKMSTADIASRQAIIDTLVEKHTSHFSAPTCLPPNQVIDGSPHCVLVTGATGSLGSHLVAHLVKQSSVTKVVCLNRVSGSDATSRQLDAFQSKGLILDSESLSKLEVIETDSSAPSLGLVPERYQHLVNTVTDVVHNAWAMSMTRPVRGFEPQFKTMRNLIDLCRDCANRRHSDTGKVGFQFVSSVSVVGCHPFITKKAIVPEQPVNAESALPMGYADAKLVCEHILDETLHMHPDIFRTMSVRVGQISGSKINGYWNPVEHLVHLIKSSKTLNVLPDLEGVLSWCPVDDVAAALGDLLLTNKPAYSVYHIENPVRQPWPDMLTILADALDIPRTNAVPFKEWLRRVRHFPPSLGFSENPAARLADFFETDFLRMSCGGMILDTTRSREHSATLRSLGPIDQDLVMKITFKRIYAIFAKSSEVKIKKSS.

The tract at residues 22–230 (PNLNDAYLQS…VISEARLATL (209 aa)) is N-terminal acylcarrier protein transacylase domain (SAT). Catalysis depends on Cys142, which acts as the Nucleophile; for transacylase activity. His261 (proton donor/acceptor; for transacylase activity) is an active-site residue. A Ketosynthase family 3 (KS3) domain is found at 388–805 (DESIAVVGMA…GSNASLVVTQ (418 aa)). Active-site for beta-ketoacyl synthase activity residues include Cys554, His689, and His728. The interval 919–1204 (FGGQRSSFVG…GSGVTNLASR (286 aa)) is malonyl-CoA:ACP transacylase (MAT). An N-terminal hotdog fold region spans residues 1290–1417 (QKGLWTFVGY…GRITFQTPKQ (128 aa)). Residues 1290 to 1592 (QKGLWTFVGY…FVEVSIAGMS (303 aa)) enclose the PKS/mFAS DH domain. Positions 1321–1590 (YVSAHVIAQT…LHFVEVSIAG (270 aa)) are product template (PT) domain. The active-site Proton acceptor; for dehydratase activity is His1325. The segment at 1445-1592 (QTIQGSRNIY…FVEVSIAGMS (148 aa)) is C-terminal hotdog fold. Asp1501 (proton donor; for dehydratase activity) is an active-site residue. A disordered region spans residues 1626–1649 (DVSKNEKDAKAPSKKKESTSKSPG). The Carrier domain maps to 1650–1724 (HDILARVRTL…SLVKCIGANM (75 aa)). Ser1684 is subject to O-(pantetheine 4'-phosphoryl)serine. Residues 1727–1766 (SDTSRTGDDSSDDLETASAESETSSGINNEDSHNIDRQQI) are disordered. A compositionally biased stretch (low complexity) spans 1742–1751 (TASAESETSS). The methyltransferase (CMeT) domain stretch occupies residues 1881–2030 (ELLRQYPEHA…DCEKTPSSHL (150 aa)). Residues 2094 to 2340 (VTGATGSLGS…SWCPVDDVAA (247 aa)) form an NADPH-binding domain region.

It depends on pantetheine 4'-phosphate as a cofactor.

The enzyme catalyses propanoyl-CoA + 3 malonyl-CoA + AH2 + 2 S-adenosyl-L-methionine + H(+) = 2-ethyl-4,6-dihydroxy-3,5-dimethylbenzaldehyde + A + 2 S-adenosyl-L-homocysteine + 3 CO2 + 4 CoA + H2O. It participates in secondary metabolite biosynthesis. In terms of biological role, non-reducing polyketide synthase that synthesizes 6-ethyl-2,4-dihydroxy-3,5-dimethylbenzaldehyde via condensation of one propanoyl-CoA starter unit with 3 malonyl-CoA units, as well as 2 methylation steps. The polypeptide is Non-reducing polyketide synthase pkdA (Emericella nidulans (strain FGSC A4 / ATCC 38163 / CBS 112.46 / NRRL 194 / M139) (Aspergillus nidulans)).